The chain runs to 366 residues: Probable neutral protease 2 homolog B (366 aa).

The first 19 residues, 1–19, serve as a signal peptide directing secretion; the sequence is MQVIVALAALSSLAAPALG. Positions 20-189 are excised as a propeptide; it reads FSIPRGVPVS…RGPRSRITKR (170 aa). Disulfide bonds link cysteine 197/cysteine 267, cysteine 274/cysteine 292, and cysteine 306/cysteine 366. Histidine 317 lines the Zn(2+) pocket. Glutamate 318 is a catalytic residue. Zn(2+)-binding residues include histidine 321 and aspartate 332.

The protein belongs to the peptidase M35 family. Zn(2+) serves as cofactor.

The protein localises to the secreted. The enzyme catalyses Preferential cleavage of bonds with hydrophobic residues in P1'. Also 3-Asn-|-Gln-4 and 8-Gly-|-Ser-9 bonds in insulin B chain.. Its function is as follows. Probable secreted metalloprotease that shows high activities on basic nuclear substrates such as histone and protamine. May be involved in virulence. This is Probable neutral protease 2 homolog B (NpII-B) from Trichophyton rubrum (Athlete's foot fungus).